Here is a 280-residue protein sequence, read N- to C-terminus: Urease accessory protein UreD (280 aa).

Belongs to the UreD family. As to quaternary structure, ureD, UreF and UreG form a complex that acts as a GTP-hydrolysis-dependent molecular chaperone, activating the urease apoprotein by helping to assemble the nickel containing metallocenter of UreC. The UreE protein probably delivers the nickel.

Its subcellular location is the cytoplasm. Its function is as follows. Required for maturation of urease via the functional incorporation of the urease nickel metallocenter. In Vibrio parahaemolyticus, this protein is Urease accessory protein UreD.